We begin with the raw amino-acid sequence, 254 residues long: 2-dehydro-3-deoxy-D-gluconate 5-dehydrogenase (254 aa).

Y159 serves as the catalytic Proton acceptor.

It belongs to the short-chain dehydrogenases/reductases (SDR) family.

It carries out the reaction 2-dehydro-3-deoxy-D-gluconate + NAD(+) = 3-deoxy-D-glycero-2,5-hexodiulosonate + NADH + H(+). In terms of biological role, involved in the degradation of 3,6-anhydro-L-galactose, which is the major monomeric sugar of red macroalgae. Catalyzes the fourth step of the pathway, the reduction of 3-deoxy-D-glycero-2,5-hexodiulosonate (L-DDGal) to 2-dehydro-3-deoxy-D-gluconate (KDG). This Pseudoalteromonas atlantica (strain T6c / ATCC BAA-1087) protein is 2-dehydro-3-deoxy-D-gluconate 5-dehydrogenase.